Here is a 425-residue protein sequence, read N- to C-terminus: Glucose-1-phosphate adenylyltransferase (425 aa).

Alpha-D-glucose 1-phosphate contacts are provided by residues Y109, G175, 190–191 (EK), and S208.

Belongs to the bacterial/plant glucose-1-phosphate adenylyltransferase family. Homotetramer.

The catalysed reaction is alpha-D-glucose 1-phosphate + ATP + H(+) = ADP-alpha-D-glucose + diphosphate. Its pathway is glycan biosynthesis; glycogen biosynthesis. Functionally, involved in the biosynthesis of ADP-glucose, a building block required for the elongation reactions to produce glycogen. Catalyzes the reaction between ATP and alpha-D-glucose 1-phosphate (G1P) to produce pyrophosphate and ADP-Glc. This chain is Glucose-1-phosphate adenylyltransferase, found in Saccharophagus degradans (strain 2-40 / ATCC 43961 / DSM 17024).